A 323-amino-acid polypeptide reads, in one-letter code: Lipoyl synthase (323 aa).

Residues C65, C70, C76, C91, C95, C98, and S304 each contribute to the [4Fe-4S] cluster site. In terms of domain architecture, Radical SAM core spans 77–293 (FNNGTATFMI…KKEALSIGFT (217 aa)).

It belongs to the radical SAM superfamily. Lipoyl synthase family. [4Fe-4S] cluster is required as a cofactor.

Its subcellular location is the cytoplasm. It carries out the reaction [[Fe-S] cluster scaffold protein carrying a second [4Fe-4S](2+) cluster] + N(6)-octanoyl-L-lysyl-[protein] + 2 oxidized [2Fe-2S]-[ferredoxin] + 2 S-adenosyl-L-methionine + 4 H(+) = [[Fe-S] cluster scaffold protein] + N(6)-[(R)-dihydrolipoyl]-L-lysyl-[protein] + 4 Fe(3+) + 2 hydrogen sulfide + 2 5'-deoxyadenosine + 2 L-methionine + 2 reduced [2Fe-2S]-[ferredoxin]. It functions in the pathway protein modification; protein lipoylation via endogenous pathway; protein N(6)-(lipoyl)lysine from octanoyl-[acyl-carrier-protein]: step 2/2. Functionally, catalyzes the radical-mediated insertion of two sulfur atoms into the C-6 and C-8 positions of the octanoyl moiety bound to the lipoyl domains of lipoate-dependent enzymes, thereby converting the octanoylated domains into lipoylated derivatives. In Buchnera aphidicola subsp. Acyrthosiphon pisum (strain APS) (Acyrthosiphon pisum symbiotic bacterium), this protein is Lipoyl synthase.